A 255-amino-acid chain; its full sequence is 4-hydroxy-tetrahydrodipicolinate reductase (255 aa).

Residues 8 to 13 (GANGRV), 88 to 90 (GTT), and 112 to 115 (ATNM) contribute to the NAD(+) site. The active-site Proton donor/acceptor is the H144. H145 serves as a coordination point for (S)-2,3,4,5-tetrahydrodipicolinate. Residue K148 is the Proton donor of the active site. 154-155 (GT) is a (S)-2,3,4,5-tetrahydrodipicolinate binding site.

Belongs to the DapB family.

The protein localises to the cytoplasm. It catalyses the reaction (S)-2,3,4,5-tetrahydrodipicolinate + NAD(+) + H2O = (2S,4S)-4-hydroxy-2,3,4,5-tetrahydrodipicolinate + NADH + H(+). The catalysed reaction is (S)-2,3,4,5-tetrahydrodipicolinate + NADP(+) + H2O = (2S,4S)-4-hydroxy-2,3,4,5-tetrahydrodipicolinate + NADPH + H(+). The protein operates within amino-acid biosynthesis; L-lysine biosynthesis via DAP pathway; (S)-tetrahydrodipicolinate from L-aspartate: step 4/4. In terms of biological role, catalyzes the conversion of 4-hydroxy-tetrahydrodipicolinate (HTPA) to tetrahydrodipicolinate. This chain is 4-hydroxy-tetrahydrodipicolinate reductase, found in Sulfurimonas denitrificans (strain ATCC 33889 / DSM 1251) (Thiomicrospira denitrificans (strain ATCC 33889 / DSM 1251)).